The following is a 598-amino-acid chain: Elongation factor 4 (598 aa).

In terms of domain architecture, tr-type G spans 4–186 (SHIRNFSIIA…VIVNKIPPPE (183 aa)). Residues 16-21 (DHGKST) and 133-136 (NKID) contribute to the GTP site.

It belongs to the TRAFAC class translation factor GTPase superfamily. Classic translation factor GTPase family. LepA subfamily.

The protein localises to the cell inner membrane. It catalyses the reaction GTP + H2O = GDP + phosphate + H(+). Its function is as follows. Required for accurate and efficient protein synthesis under certain stress conditions. May act as a fidelity factor of the translation reaction, by catalyzing a one-codon backward translocation of tRNAs on improperly translocated ribosomes. Back-translocation proceeds from a post-translocation (POST) complex to a pre-translocation (PRE) complex, thus giving elongation factor G a second chance to translocate the tRNAs correctly. Binds to ribosomes in a GTP-dependent manner. The sequence is that of Elongation factor 4 from Alteromonas mediterranea (strain DSM 17117 / CIP 110805 / LMG 28347 / Deep ecotype).